A 196-amino-acid chain; its full sequence is DNA replication complex GINS protein PSF1 (196 aa).

This sequence belongs to the GINS1/PSF1 family. Component of the GINS complex which is a heterotetramer of GINS1, GINS2, GINS3 and GINS4. Forms a stable subcomplex with GINS4. GINS complex interacts with DNA primase in vitro. Component of the CMG helicase complex, a hexameric ring of related MCM2-7 subunits stabilized by CDC45 and the tetrameric GINS complex.

It localises to the nucleus. It is found in the chromosome. In terms of biological role, required for correct functioning of the GINS complex, a complex that plays an essential role in the initiation of DNA replication, and progression of DNA replication forks. GINS complex is a core component of CDC45-MCM-GINS (CMG) helicase, the molecular machine that unwinds template DNA during replication, and around which the replisome is built. The sequence is that of DNA replication complex GINS protein PSF1 (GINS1) from Bos taurus (Bovine).